We begin with the raw amino-acid sequence, 209 residues long: Uracil phosphoribosyltransferase (209 aa).

5-phospho-alpha-D-ribose 1-diphosphate is bound by residues arginine 79, arginine 104, and 131-139 (DPMLATGAS). Residues isoleucine 194 and 199-201 (GDA) each bind uracil. Aspartate 200 serves as a coordination point for 5-phospho-alpha-D-ribose 1-diphosphate.

It belongs to the UPRTase family. Mg(2+) serves as cofactor.

The catalysed reaction is UMP + diphosphate = 5-phospho-alpha-D-ribose 1-diphosphate + uracil. It participates in pyrimidine metabolism; UMP biosynthesis via salvage pathway; UMP from uracil: step 1/1. With respect to regulation, allosterically activated by GTP. Functionally, catalyzes the conversion of uracil and 5-phospho-alpha-D-ribose 1-diphosphate (PRPP) to UMP and diphosphate. The sequence is that of Uracil phosphoribosyltransferase from Staphylococcus epidermidis (strain ATCC 35984 / DSM 28319 / BCRC 17069 / CCUG 31568 / BM 3577 / RP62A).